The sequence spans 348 residues: Phosphate acyltransferase (348 aa).

The protein belongs to the PlsX family. In terms of assembly, homodimer. Probably interacts with PlsY.

It is found in the cytoplasm. It catalyses the reaction a fatty acyl-[ACP] + phosphate = an acyl phosphate + holo-[ACP]. It functions in the pathway lipid metabolism; phospholipid metabolism. In terms of biological role, catalyzes the reversible formation of acyl-phosphate (acyl-PO(4)) from acyl-[acyl-carrier-protein] (acyl-ACP). This enzyme utilizes acyl-ACP as fatty acyl donor, but not acyl-CoA. This is Phosphate acyltransferase from Neisseria gonorrhoeae (strain ATCC 700825 / FA 1090).